A 279-amino-acid chain; its full sequence is Putative methyltransferase Jann_4284 (279 aa).

This is Putative methyltransferase Jann_4284 from Jannaschia sp. (strain CCS1).